Consider the following 67-residue polypeptide: ATP synthase protein 8 (67 aa).

The chain crosses the membrane as a helical span at residues 8–24; it reads TWFITILSMLMTLFILF. The residue at position 54 (lysine 54) is an N6-acetyllysine; alternate. The residue at position 54 (lysine 54) is an N6-succinyllysine; alternate. N6-acetyllysine is present on lysine 57.

It belongs to the ATPase protein 8 family. As to quaternary structure, F-type ATPases have 2 components, CF(1) - the catalytic core - and CF(0) - the membrane proton channel. Component of an ATP synthase complex composed of ATP5PB, ATP5MC1, ATP5F1E, ATP5PD, ATP5ME, ATP5PF, ATP5MF, MT-ATP6, MT-ATP8, ATP5F1A, ATP5F1B, ATP5F1D, ATP5F1C, ATP5PO, ATP5MG, ATP5MK and ATP5MJ. Interacts with PRICKLE3.

The protein localises to the mitochondrion membrane. Mitochondrial membrane ATP synthase (F(1)F(0) ATP synthase or Complex V) produces ATP from ADP in the presence of a proton gradient across the membrane which is generated by electron transport complexes of the respiratory chain. F-type ATPases consist of two structural domains, F(1) - containing the extramembraneous catalytic core and F(0) - containing the membrane proton channel, linked together by a central stalk and a peripheral stalk. During catalysis, ATP synthesis in the catalytic domain of F(1) is coupled via a rotary mechanism of the central stalk subunits to proton translocation. Part of the complex F(0) domain. Minor subunit located with subunit a in the membrane. The sequence is that of ATP synthase protein 8 (MT-ATP8) from Vicugna pacos (Alpaca).